Here is a 695-residue protein sequence, read N- to C-terminus: NAD(P)H-quinone oxidoreductase subunit 5, chloroplastic (695 aa).

The next 15 membrane-spanning stretches (helical) occupy residues 1–21 (WIIP…LILF), 32–52 (WAFQ…YLSI), 81–101 (IDPL…MVLI), 117–137 (FAYM…SNLI), 139–159 (IYIF…FWFT), 177–197 (GDFG…SFEF), 211–231 (NEVN…GAVA), 250–270 (TPIS…FLVA), 278–298 (VIPY…LLGA), 319–339 (LGYM…FHLI), 346–366 (ALLF…VGYS), 388–408 (ITFL…CFWS), 417–437 (WLYS…TAFY), 535–555 (LFPI…GIPF), and 594–614 (VLSV…YKPI).

The protein belongs to the complex I subunit 5 family. As to quaternary structure, NDH is composed of at least 16 different subunits, 5 of which are encoded in the nucleus.

Its subcellular location is the plastid. The protein resides in the chloroplast thylakoid membrane. The catalysed reaction is a plastoquinone + NADH + (n+1) H(+)(in) = a plastoquinol + NAD(+) + n H(+)(out). It catalyses the reaction a plastoquinone + NADPH + (n+1) H(+)(in) = a plastoquinol + NADP(+) + n H(+)(out). Functionally, NDH shuttles electrons from NAD(P)H:plastoquinone, via FMN and iron-sulfur (Fe-S) centers, to quinones in the photosynthetic chain and possibly in a chloroplast respiratory chain. The immediate electron acceptor for the enzyme in this species is believed to be plastoquinone. Couples the redox reaction to proton translocation, and thus conserves the redox energy in a proton gradient. This Capsicum baccatum (Peruvian pepper) protein is NAD(P)H-quinone oxidoreductase subunit 5, chloroplastic (ndhF).